Here is a 495-residue protein sequence, read N- to C-terminus: Lysine--tRNA ligase (495 aa).

The Mg(2+) site is built by Glu406 and Glu413.

Belongs to the class-II aminoacyl-tRNA synthetase family. In terms of assembly, homodimer. It depends on Mg(2+) as a cofactor.

Its subcellular location is the cytoplasm. It catalyses the reaction tRNA(Lys) + L-lysine + ATP = L-lysyl-tRNA(Lys) + AMP + diphosphate. In Staphylococcus saprophyticus subsp. saprophyticus (strain ATCC 15305 / DSM 20229 / NCIMB 8711 / NCTC 7292 / S-41), this protein is Lysine--tRNA ligase.